The sequence spans 358 residues: Isopentenyl-diphosphate delta-isomerase (358 aa).

Arginine 12–lysine 13 is a substrate binding site. Residues alanine 69–threonine 71, serine 99, and asparagine 128 contribute to the FMN site. Position 158 (glutamine 158) interacts with substrate. Glutamate 159 provides a ligand contact to Mg(2+). Residues lysine 190, threonine 220, glycine 267–arginine 269, and alanine 288–glycine 289 contribute to the FMN site.

The protein belongs to the IPP isomerase type 2 family. In terms of assembly, homooctamer. Dimer of tetramers. FMN is required as a cofactor. Requires NADPH as cofactor. The cofactor is Mg(2+).

Its subcellular location is the cytoplasm. The catalysed reaction is isopentenyl diphosphate = dimethylallyl diphosphate. Functionally, involved in the biosynthesis of isoprenoids. Catalyzes the 1,3-allylic rearrangement of the homoallylic substrate isopentenyl (IPP) to its allylic isomer, dimethylallyl diphosphate (DMAPP). This Listeria innocua serovar 6a (strain ATCC BAA-680 / CLIP 11262) protein is Isopentenyl-diphosphate delta-isomerase.